Here is a 489-residue protein sequence, read N- to C-terminus: Glycogen synthase (489 aa).

Lysine 15 serves as a coordination point for ADP-alpha-D-glucose.

The protein belongs to the glycosyltransferase 1 family. Bacterial/plant glycogen synthase subfamily.

It catalyses the reaction [(1-&gt;4)-alpha-D-glucosyl](n) + ADP-alpha-D-glucose = [(1-&gt;4)-alpha-D-glucosyl](n+1) + ADP + H(+). It participates in glycan biosynthesis; glycogen biosynthesis. Synthesizes alpha-1,4-glucan chains using ADP-glucose. This Francisella tularensis subsp. tularensis (strain SCHU S4 / Schu 4) protein is Glycogen synthase.